A 320-amino-acid chain; its full sequence is Malate dehydrogenase (320 aa).

Residues 10-15 and aspartate 34 contribute to the NAD(+) site; that span reads GSGMIG. The substrate site is built by arginine 83 and arginine 89. NAD(+)-binding positions include asparagine 96 and 119–121; that span reads ITN. 2 residues coordinate substrate: asparagine 121 and arginine 152. Residue histidine 176 is the Proton acceptor of the active site.

The protein belongs to the LDH/MDH superfamily. MDH type 3 family.

The enzyme catalyses (S)-malate + NAD(+) = oxaloacetate + NADH + H(+). Its function is as follows. Catalyzes the reversible oxidation of malate to oxaloacetate. This is Malate dehydrogenase from Brucella suis (strain ATCC 23445 / NCTC 10510).